The primary structure comprises 224 residues: Inhibitor of apoptosis protein (224 aa).

Residues 29–92 (VDARNKSFAI…GFWSRNCGFM (64 aa)) form a BIR repeat. Zn(2+)-binding residues include cysteine 62, cysteine 65, histidine 82, and cysteine 89. The C4-type zinc finger occupies 189 to 207 (CMTCGIEQINKDENFCSAC).

The protein belongs to the asfivirus IAP family. As to quaternary structure, interacts with subunit p17 of host CASP3.

It localises to the host cytoplasm. Its subcellular location is the virion. Functionally, prevents apoptosis of host cell by inhibiting caspase-3/CASP3 activation to promote the viral replication. Also induces the activation of host NF-kappaB. The protein is Inhibitor of apoptosis protein of Ornithodoros (relapsing fever ticks).